The sequence spans 111 residues: Large ribosomal subunit protein eL33x (111 aa).

Belongs to the eukaryotic ribosomal protein eL33 family.

This is Large ribosomal subunit protein eL33x (RPL35AD) from Arabidopsis thaliana (Mouse-ear cress).